The sequence spans 313 residues: Beta-ketoacyl-[acyl-carrier-protein] synthase III (313 aa).

Active-site residues include cysteine 112 and histidine 238. Residues 239-243 are ACP-binding; that stretch reads QANIR. Asparagine 268 is a catalytic residue.

This sequence belongs to the thiolase-like superfamily. FabH family. Homodimer.

It is found in the cytoplasm. The catalysed reaction is malonyl-[ACP] + acetyl-CoA + H(+) = 3-oxobutanoyl-[ACP] + CO2 + CoA. The protein operates within lipid metabolism; fatty acid biosynthesis. Catalyzes the condensation reaction of fatty acid synthesis by the addition to an acyl acceptor of two carbons from malonyl-ACP. Catalyzes the first condensation reaction which initiates fatty acid synthesis and may therefore play a role in governing the total rate of fatty acid production. Possesses both acetoacetyl-ACP synthase and acetyl transacylase activities. Its substrate specificity determines the biosynthesis of branched-chain and/or straight-chain of fatty acids. The polypeptide is Beta-ketoacyl-[acyl-carrier-protein] synthase III (Staphylococcus haemolyticus (strain JCSC1435)).